A 521-amino-acid chain; its full sequence is Bifunctional purine biosynthesis protein PurH (521 aa).

The 145-residue stretch at 1–145 (MIKQALISVS…KNHRDVTVVV (145 aa)) folds into the MGS-like domain.

It belongs to the PurH family.

The catalysed reaction is (6R)-10-formyltetrahydrofolate + 5-amino-1-(5-phospho-beta-D-ribosyl)imidazole-4-carboxamide = 5-formamido-1-(5-phospho-D-ribosyl)imidazole-4-carboxamide + (6S)-5,6,7,8-tetrahydrofolate. It catalyses the reaction IMP + H2O = 5-formamido-1-(5-phospho-D-ribosyl)imidazole-4-carboxamide. It functions in the pathway purine metabolism; IMP biosynthesis via de novo pathway; 5-formamido-1-(5-phospho-D-ribosyl)imidazole-4-carboxamide from 5-amino-1-(5-phospho-D-ribosyl)imidazole-4-carboxamide (10-formyl THF route): step 1/1. The protein operates within purine metabolism; IMP biosynthesis via de novo pathway; IMP from 5-formamido-1-(5-phospho-D-ribosyl)imidazole-4-carboxamide: step 1/1. The protein is Bifunctional purine biosynthesis protein PurH of Burkholderia lata (strain ATCC 17760 / DSM 23089 / LMG 22485 / NCIMB 9086 / R18194 / 383).